The chain runs to 33 residues: Photosystem II reaction center protein Psb30 (33 aa).

The helical transmembrane segment at 5–25 (LIVQLTSLALITLAGPLIVAL) threads the bilayer.

Belongs to the Psb30/Ycf12 family. As to quaternary structure, PSII is composed of 1 copy each of membrane proteins PsbA, PsbB, PsbC, PsbD, PsbE, PsbF, PsbH, PsbI, PsbJ, PsbK, PsbL, PsbM, PsbT, PsbY, PsbZ, Psb30/Ycf12, peripheral proteins of the oxygen-evolving complex and a large number of cofactors. It forms dimeric complexes.

The protein localises to the plastid. The protein resides in the chloroplast thylakoid membrane. Its function is as follows. A core subunit of photosystem II (PSII), probably helps stabilize the reaction center. The protein is Photosystem II reaction center protein Psb30 of Euglena sanguinea.